We begin with the raw amino-acid sequence, 124 residues long: Small ribosomal subunit protein bS6 (124 aa).

The disordered stretch occupies residues Lys100–Asn124. Residues Gly110 to Asn124 show a composition bias toward polar residues.

It belongs to the bacterial ribosomal protein bS6 family.

Its function is as follows. Binds together with bS18 to 16S ribosomal RNA. The chain is Small ribosomal subunit protein bS6 from Fervidobacterium nodosum (strain ATCC 35602 / DSM 5306 / Rt17-B1).